The sequence spans 67 residues: Cell division protein ZapB (67 aa).

Positions 3–59 (LELLSKLETKIQAALETIELLKMELEEEKQTSSSLSEQNQQLQQELTSWNEKVTGLV) form a coiled coil.

Belongs to the ZapB family. Homodimer. The ends of the coiled-coil dimer bind to each other, forming polymers. Interacts with FtsZ.

The protein resides in the cytoplasm. Non-essential, abundant cell division factor that is required for proper Z-ring formation. It is recruited early to the divisome by direct interaction with FtsZ, stimulating Z-ring assembly and thereby promoting cell division earlier in the cell cycle. Its recruitment to the Z-ring requires functional FtsA or ZipA. The protein is Cell division protein ZapB of Shewanella halifaxensis (strain HAW-EB4).